A 555-amino-acid polypeptide reads, in one-letter code: Wee1-like protein kinase 2-A (555 aa).

Disordered stretches follow at residues 1–81 (MRTA…SVGA) and 149–175 (FTPE…DCRT). The span at 38-48 (SPVSSWRTNNC) shows a compositional bias: polar residues. A compositionally biased stretch (low complexity) spans 68–78 (SPSSDYSPDPS). A compositionally biased stretch (polar residues) spans 149–160 (FTPESYRQTHFQ). Residues 210–480 (FLEIEKIGAG…AASLAKNSVL (271 aa)) form the Protein kinase domain. ATP contacts are provided by residues 216–224 (IGAGEFGSV) and Lys239. The active-site Proton acceptor is the Asp337. Residues Asn342 and Asp374 each coordinate Mg(2+). The stretch at 487 to 513 (AAQLQKQLNVEKFKTAMLERELKAAKL) forms a coiled coil. Position 549 is a phosphoserine (Ser549).

Belongs to the protein kinase superfamily. Ser/Thr protein kinase family. WEE1 subfamily. In terms of assembly, interacts with prmt5; this promotes protesomal degradation of wee2-a in the nucleus. The interaction with prmt5 is disrupted upon activation of the DNA replication checkpoint. Post-translationally, subject to proteasomal degradation in the nucleus. Detected in egg (at protein level). Oocyte-specific maternally supplied protein. Present in immature and mature oocytes and in early (pregastrula) embryos, but not in post-gastrula embryos.

The protein resides in the nucleus. It is found in the cytoplasm. It localises to the cytosol. The enzyme catalyses L-tyrosyl-[protein] + ATP = O-phospho-L-tyrosyl-[protein] + ADP + H(+). Oocyte-specific protein tyrosine kinase that phosphorylates and inhibits cdk1 and acts as a key regulator of meiosis. Required to maintain meiotic arrest in oocytes by phosphorylating cdk1 at 'Tyr-15', which inhibits cdk1 activity and prevents meiotic reentry. Negative regulator of mitosis. Involved in the mitotic DNA replication checkpoint. The protein is Wee1-like protein kinase 2-A (wee2-a) of Xenopus laevis (African clawed frog).